We begin with the raw amino-acid sequence, 451 residues long: Histidinol dehydrogenase (451 aa).

The tract at residues 1–20 is disordered; it reads MLNVTDLRGHTPSKSDIRRA. Residues 7-19 are compositionally biased toward basic and acidic residues; that stretch reads LRGHTPSKSDIRR. NAD(+) contacts are provided by Y129, Q193, and N218. The substrate site is built by T241, Q263, and H266. Q263 and H266 together coordinate Zn(2+). Residues E332 and H333 each act as proton acceptor in the active site. Substrate contacts are provided by H333, D366, E420, and H425. D366 is a binding site for Zn(2+). H425 contacts Zn(2+).

Belongs to the histidinol dehydrogenase family. It depends on Zn(2+) as a cofactor.

It catalyses the reaction L-histidinol + 2 NAD(+) + H2O = L-histidine + 2 NADH + 3 H(+). Its pathway is amino-acid biosynthesis; L-histidine biosynthesis; L-histidine from 5-phospho-alpha-D-ribose 1-diphosphate: step 9/9. Catalyzes the sequential NAD-dependent oxidations of L-histidinol to L-histidinaldehyde and then to L-histidine. In Corynebacterium efficiens (strain DSM 44549 / YS-314 / AJ 12310 / JCM 11189 / NBRC 100395), this protein is Histidinol dehydrogenase.